Consider the following 488-residue polypeptide: Proline--tRNA ligase (488 aa).

It belongs to the class-II aminoacyl-tRNA synthetase family. ProS type 3 subfamily. Homodimer.

It is found in the cytoplasm. The enzyme catalyses tRNA(Pro) + L-proline + ATP = L-prolyl-tRNA(Pro) + AMP + diphosphate. Functionally, catalyzes the attachment of proline to tRNA(Pro) in a two-step reaction: proline is first activated by ATP to form Pro-AMP and then transferred to the acceptor end of tRNA(Pro). The protein is Proline--tRNA ligase of Borrelia garinii subsp. bavariensis (strain ATCC BAA-2496 / DSM 23469 / PBi) (Borreliella bavariensis).